The primary structure comprises 226 residues: Adenosine 5'-phosphosulfate reductase (226 aa).

[4Fe-4S] cluster-binding residues include C112, C113, C195, and C198. The Nucleophile; cysteine thiosulfonate intermediate role is filled by C221.

This sequence belongs to the PAPS reductase family. CysH subfamily. The cofactor is [4Fe-4S] cluster.

The protein resides in the cytoplasm. It carries out the reaction [thioredoxin]-disulfide + sulfite + AMP + 2 H(+) = adenosine 5'-phosphosulfate + [thioredoxin]-dithiol. Its pathway is sulfur metabolism; hydrogen sulfide biosynthesis; sulfite from sulfate. Catalyzes the formation of sulfite from adenosine 5'-phosphosulfate (APS) using thioredoxin as an electron donor. The polypeptide is Adenosine 5'-phosphosulfate reductase (Bacillus anthracis (strain A0248)).